The following is a 100-amino-acid chain: Osteocalcin (100 aa).

The signal sequence occupies residues 1-23 (MRTPMLLALLALATLCLAGRADA). A propeptide spanning residues 24-51 (KPGDAESGKGAAFVSKQEGSEVVKRLRR) is cleaved from the precursor. Residues 52–98 (YLDHWLGAPAPYPDPLEPKREVCELNPDCDELADHIGFQEAYRRFYG) form the Gla domain. A 4-hydroxyproline modification is found at proline 60. Residues glutamate 68, glutamate 72, glutamate 75, and aspartate 81 each coordinate Ca(2+). 4-carboxyglutamate occurs at positions 68, 72, and 75. An intrachain disulfide couples cysteine 74 to cysteine 80.

It belongs to the osteocalcin/matrix Gla protein family. Post-translationally, gamma-carboxyglutamate residues are formed by vitamin K dependent carboxylation by GGCX. These residues are essential for the binding of calcium. Decarboxylation promotes the hormone activity.

It localises to the secreted. Functionally, the carboxylated form is one of the main organic components of the bone matrix, which constitutes 1-2% of the total bone protein. It acts as a negative regulator of bone formation and is required to limit bone formation without impairing bone resorption or mineralization. The carboxylated form binds strongly to apatite and calcium. In terms of biological role, the uncarboxylated form acts as a hormone secreted by osteoblasts, which regulates different cellular processes, such as energy metabolism, male fertility and brain development. Regulates of energy metabolism by acting as a hormone favoring pancreatic beta-cell proliferation, insulin secretion and sensitivity and energy expenditure. Uncarboxylated osteocalcin hormone also promotes testosterone production in the testes: acts as a ligand for G protein-coupled receptor GPRC6A at the surface of Leydig cells, initiating a signaling response that promotes the expression of enzymes required for testosterone synthesis in a CREB-dependent manner. Also acts as a regulator of brain development: osteocalcin hormone crosses the blood-brain barrier and acts as a ligand for GPR158 on neurons, initiating a signaling response that prevents neuronal apoptosis in the hippocampus, favors the synthesis of all monoamine neurotransmitters and inhibits that of gamma-aminobutyric acid (GABA). Osteocalcin also crosses the placenta during pregnancy and maternal osteocalcin is required for fetal brain development. This Bos taurus (Bovine) protein is Osteocalcin (BGLAP).